The primary structure comprises 864 residues: MRWIKVMAGLLPMIGSKGADEKDSSQQRRLSRVVVPEHYDLHVKILDAGFCGSVGIRVMISQDVSEIVLNAKELEIRDAGIVVEGARIPGRVVVGEAEKELEVVRIVFPSSLRAGPGYLTMEFCGDYSNGLVGLYKSGGPKEVYSTHFEPTDARRAFPCFDQPDMKATFKISIDAGSKFTVLANTQAIPSLREEYGDRKIEYFEETCKMSTYLVAFVVGELSYIEDWSKDGVRLRVYGDSSEVEWGRYGLEVGKRCLEYFSEYFGVGYEFPRAGSAKIDMVGIPNFSSGAMENWGLITFRRESLLYVPGKSNVEDMKNVAGTVCHELGHMWFGNLVTMSWWDDLWLNEGFATWVSFKGMENIGSVVSWDVWGEFVLWNVVRGMVDDGLGKSHQIRMNVTDPGEIGEIFDSISYCKGASVIRMIERYVGESVFMLGIRRYIKEHMYGNGNAMSLWKAIGEEYGEDISEMVEGWISQAGYPVVSVQDCGSSLVLSQSRYSMLGKSDDSLWTIPVVVSWEGKGQERIELRGRETTVRKRSSVYKVNAEYGGFYRVLYDSAGLSGLESRIDSLSVVDRVNVIEDVFGLGFGLYGGLEHGLRRISEYYSDSYHVARSGIEKLLRLRSVFYDDAEIVSLIDKKVRKMILPCVGRIDVFDIGTSVESVSMNKYVLSVGVEVGIREAVEKVQELWRRHVEAGEELGELRWIVYKAVVDENLGYMMDKYKNGDTPGMRREVMNGFSGIKREENFLDVVGNLSQFSVEDIGVVIGSISRGGAFRDAMVEYVVSHGEELYLMVHKNAMLYNMIIMSLRHVSGDLIVEKVERFLSGIKHSGSNLSIEKVRNEIQWRRRMRGIREEVLRGLLPEAEK.

Residues E149 and 289-293 contribute to the substrate site; that span reads GAMEN. H325 provides a ligand contact to Zn(2+). Catalysis depends on E326, which acts as the Proton acceptor. Zn(2+) is bound by residues H329 and E348.

It belongs to the peptidase M1 family. Zn(2+) serves as cofactor.

The polypeptide is Probable M1 family aminopeptidase 1 (Encephalitozoon cuniculi (strain GB-M1) (Microsporidian parasite)).